We begin with the raw amino-acid sequence, 193 residues long: Protein PrsJ (193 aa).

Residues 1–27 (MVVNKTTAVLYLIALSLSGFIHTFLRA) form the signal peptide.

The protein localises to the periplasm. Functionally, this protein maintains pilus integrity and thus is an important participant in pilus assembly. It may function as molecular chaperone directly or indirectly in the correct assembly of PapA subunits. The sequence is that of Protein PrsJ (prsJ) from Escherichia coli.